We begin with the raw amino-acid sequence, 221 residues long: Type 3 secretion system stator protein (221 aa).

Belongs to the SctL stator family. In terms of assembly, the core secretion machinery of the T3SS is composed of approximately 20 different proteins, including cytoplasmic components, a base, an export apparatus and a needle. This subunit is part of the cytosolic complex. Interacts directly with YscN/SctN (T3SS ATPase) and YscQ/SctQ (the major sorting platform component).

Its subcellular location is the cytoplasm. Its function is as follows. Component of the type III secretion system (T3SS), also called injectisome, which is used to inject bacterial effector proteins into eukaryotic host cells. Acts as a regulator of the YscN/SctN ATPase activity. This chain is Type 3 secretion system stator protein, found in Yersinia pestis.